Consider the following 64-residue polypeptide: Defensin beta 4A (64 aa).

The first 23 residues, 1-23, serve as a signal peptide directing secretion; it reads MRVLYLLFSFLFIFLMPLPGVFG. Intrachain disulfides connect Cys-31-Cys-60, Cys-38-Cys-53, and Cys-43-Cys-61. Positions 33-48 are phosphatidylinositol 4,5-bisphosphate (PIP2) binding; the sequence is KNGAICHPVFCPRRYK.

The protein belongs to the beta-defensin family. LAP/TAP subfamily. Monomer. Homodimer.

It is found in the secreted. Functionally, exhibits antimicrobial activity against Gram-negative bacteria and Gram-positive bacteria, with highest activity against Gram-negative bacteria. Antimicrobial activity against P.aruginosa seems to be salt-sensitive and is reduced with high salt concentrations greater than 25 mM. Also exhibits antimicrobial activity against the yeast C.albicans. Permeabilizes C.albicans cell membranes via targeting plasma membrane lipid phosphatidylinositol 4,5-bisphosphate (PIP2), thereby leading to cell fragmentation and cell death. Acts as a ligand for C-C chemokine receptor CCR6. Binds to CCR6 and induces chemotactic activity of CCR6-expressing cells, such as immature dendritic cells and memory T cells. In Macaca mulatta (Rhesus macaque), this protein is Defensin beta 4A (DEFB4A).